Here is a 200-residue protein sequence, read N- to C-terminus: Large ribosomal subunit protein uL4 (200 aa).

Residues 38–68 (GRQGSKQQKTRSDVRGGGKRPWRQKGTGRAR) are disordered. The segment covering 54–65 (GGKRPWRQKGTG) has biased composition (basic residues).

Belongs to the universal ribosomal protein uL4 family. As to quaternary structure, part of the 50S ribosomal subunit.

Its function is as follows. One of the primary rRNA binding proteins, this protein initially binds near the 5'-end of the 23S rRNA. It is important during the early stages of 50S assembly. It makes multiple contacts with different domains of the 23S rRNA in the assembled 50S subunit and ribosome. Functionally, forms part of the polypeptide exit tunnel. The protein is Large ribosomal subunit protein uL4 of Pseudomonas fluorescens (strain SBW25).